The following is a 47-amino-acid chain: Rhodotorucin-A peptides type 3 (47 aa).

Residues 1–3 constitute a propeptide that is removed on maturation; it reads MVA. Cysteine 14 carries the S-farnesyl cysteine lipid modification. The propeptide occupies 15–18; that stretch reads TVAK. Cysteine 29 is lipidated: S-farnesyl cysteine. Residues 30–33 constitute a propeptide that is removed on maturation; the sequence is TVSK. Cysteine 44 carries S-farnesyl cysteine lipidation. The propeptide occupies 45–47; it reads TVA.

The protein resides in the cell membrane. Functionally, rhodotorucin-A is a mating pheromone in cells of mating type A of Rhodosporidium toruloides. In Rhodotorula toruloides (Yeast), this protein is Rhodotorucin-A peptides type 3 (RHA3).